A 653-amino-acid polypeptide reads, in one-letter code: Choline transporter-like protein 1 (653 aa).

Gly-2 carries N-myristoyl glycine lipidation. Residues 2 to 29 (GCCSSASAAQSSKREWKPLEDRSCTDIP) are Cytoplasmic-facing. A helical membrane pass occupies residues 30-50 (WLLLFVLFCIGMGFICGFSVA). At 51 to 211 (TGAAARLVSG…RLISGVMTSK (161 aa)) the chain is on the mitochondrial intermembrane side. A helical transmembrane segment spans residues 212-232 (EIILGLCLLSLVLSMILMVII). The Cytoplasmic portion of the chain corresponds to 233–237 (RYISR). The chain crosses the membrane as a helical span at residues 238–258 (VLVWILTVLVILGSLGGTGVL). The Mitochondrial intermembrane portion of the chain corresponds to 259–287 (WWLYAKQRRSPKEAVIPEQLQIAEDNLRA). A helical transmembrane segment spans residues 288 to 308 (LLIYAISATVFTVILFLIMLV). The Cytoplasmic segment spans residues 309–314 (MRKRVA). The chain crosses the membrane as a helical span at residues 315–335 (LTIALFHVAGKVFIHLPLLVF). Residues 336 to 337 (QP) lie on the Mitochondrial intermembrane side of the membrane. The chain crosses the membrane as a helical span at residues 338 to 358 (FWTFFALVLFWAYWIMTLLFL). The Cytoplasmic portion of the chain corresponds to 359–379 (GTTGSAVQNEQGFVEYKISGP). Residues 380–400 (LQYMWWYHVVGLIWISEFILA) form a helical membrane-spanning segment. Residues 401-536 (CQQMTVAGAV…RVAAINTVGD (136 aa)) lie on the Mitochondrial intermembrane side of the membrane. Residues 537 to 557 (FMLFLGKVLIVCSTGLAGIML) form a helical membrane-spanning segment. Topologically, residues 558-565 (LNYQQDYT) are cytoplasmic. A helical membrane pass occupies residues 566–586 (VWVLPLIIVCLFAFLVAHCFL). At 587–653 (SIYEMVVDVL…RELKPMLRKR (67 aa)) the chain is on the mitochondrial intermembrane side.

This sequence belongs to the CTL (choline transporter-like) family. Specifically abundant in skeletal muscle (at protein level).

Its subcellular location is the cell membrane. The protein resides in the mitochondrion outer membrane. The catalysed reaction is choline(out) + n H(+)(in) = choline(in) + n H(+)(out). It carries out the reaction ethanolamine(out) + n H(+)(in) = ethanolamine(in) + n H(+)(out). In terms of biological role, choline/H+ antiporter. Also acts as a high-affinity ethanolamine/H+ antiporter, regulating the supply of extracellular ethanolamine (Etn) for the CDP-Etn pathway, redistribute intracellular Etn and balance the CDP-Cho and CDP-Etn arms of the Kennedy pathway. Involved in membrane synthesis and myelin production. The polypeptide is Choline transporter-like protein 1 (Slc44a1) (Mus musculus (Mouse)).